The primary structure comprises 75 residues: MGSFSIWHWLIVLVIIALVFGTKKLRNVGSDLGSAVKGFKEGMKDASADKPADQVTQQRVSDDTIDVQAKEKSNS.

A helical membrane pass occupies residues 1–21 (MGSFSIWHWLIVLVIIALVFG). Positions 45 to 75 (DASADKPADQVTQQRVSDDTIDVQAKEKSNS) are disordered.

The protein belongs to the TatA/E family. The Tat system comprises two distinct complexes: a TatABC complex, containing multiple copies of TatA, TatB and TatC subunits, and a separate TatA complex, containing only TatA subunits. Substrates initially bind to the TatABC complex, which probably triggers association of the separate TatA complex to form the active translocon.

It is found in the cell inner membrane. Its function is as follows. Part of the twin-arginine translocation (Tat) system that transports large folded proteins containing a characteristic twin-arginine motif in their signal peptide across membranes. TatA could form the protein-conducting channel of the Tat system. The sequence is that of Sec-independent protein translocase protein TatA from Bordetella bronchiseptica (strain ATCC BAA-588 / NCTC 13252 / RB50) (Alcaligenes bronchisepticus).